The chain runs to 334 residues: MGMKKNRPRRGSLAFSPRKRAKKLVPKIRSWPADKKVGLQAFPVYKAGTTHALLVENNPKSPNNGQEVFSPVTVLETPEITVAGIRAYGKTTKGLKALTEVWAKQQDKELGRKLTVTKKEEIKTVESLDAVLEKTVDLRVIVHTNPKTTGIPKKKPEVVEIRVGGSSVAEKLAYAKDILGKTLSINDVFETGEFIDTLAVTKGKGFQGPVKRWGVKIQFGKHQRKGVGRQTGSIGPWRPKRVMWTVPLAGQMGFHQRTEYNKRILKLGSEGAEITPKGGFLNYGAVKNGYVVVKGTVQGPAKRLVVLRGAVRPAEDKFGLPEVTYISKESKQGN.

The span at 1 to 10 (MGMKKNRPRR) shows a compositional bias: basic residues. The disordered stretch occupies residues 1–21 (MGMKKNRPRRGSLAFSPRKRA).

This sequence belongs to the universal ribosomal protein uL3 family. As to quaternary structure, part of the 50S ribosomal subunit. Forms a cluster with proteins L14 and L24e.

One of the primary rRNA binding proteins, it binds directly near the 3'-end of the 23S rRNA, where it nucleates assembly of the 50S subunit. The chain is Large ribosomal subunit protein uL3 from Methanococcus vannielii (strain ATCC 35089 / DSM 1224 / JCM 13029 / OCM 148 / SB).